The sequence spans 677 residues: Methionine--tRNA ligase (677 aa).

A 'HIGH' region motif is present at residues 15–25 (PYANGSIHLGH). C146, C149, C159, and C162 together coordinate Zn(2+). The short motif at 333–337 (KMSKS) is the 'KMSKS' region element. K336 is a binding site for ATP. The 103-residue stretch at 575–677 (DFAKVDLRVA…DGAKPGQQVK (103 aa)) folds into the tRNA-binding domain.

Belongs to the class-I aminoacyl-tRNA synthetase family. MetG type 1 subfamily. As to quaternary structure, homodimer. Zn(2+) is required as a cofactor.

The protein resides in the cytoplasm. It catalyses the reaction tRNA(Met) + L-methionine + ATP = L-methionyl-tRNA(Met) + AMP + diphosphate. In terms of biological role, is required not only for elongation of protein synthesis but also for the initiation of all mRNA translation through initiator tRNA(fMet) aminoacylation. The sequence is that of Methionine--tRNA ligase from Klebsiella pneumoniae subsp. pneumoniae (strain ATCC 700721 / MGH 78578).